The primary structure comprises 1497 residues: DNA-directed RNA polymerase subunit beta' (1497 aa).

Residues Cys-67, Cys-69, Cys-82, and Cys-85 each coordinate Zn(2+). 3 residues coordinate Mg(2+): Asp-499, Asp-501, and Asp-503. Positions 867, 943, 950, and 953 each coordinate Zn(2+). Positions 1476 to 1497 (ESNATERVVEEPATREGFANER) are disordered. The span at 1482 to 1497 (RVVEEPATREGFANER) shows a compositional bias: basic and acidic residues.

Belongs to the RNA polymerase beta' chain family. As to quaternary structure, the RNAP catalytic core consists of 2 alpha, 1 beta, 1 beta' and 1 omega subunit. When a sigma factor is associated with the core the holoenzyme is formed, which can initiate transcription. Mg(2+) is required as a cofactor. Zn(2+) serves as cofactor.

It catalyses the reaction RNA(n) + a ribonucleoside 5'-triphosphate = RNA(n+1) + diphosphate. DNA-dependent RNA polymerase catalyzes the transcription of DNA into RNA using the four ribonucleoside triphosphates as substrates. In Pelodictyon phaeoclathratiforme (strain DSM 5477 / BU-1), this protein is DNA-directed RNA polymerase subunit beta'.